The following is a 137-amino-acid chain: Large ribosomal subunit protein uL16 (137 aa).

The segment at 1–20 (MLQPKRTKFRKQQKMRNRGL) is disordered.

This sequence belongs to the universal ribosomal protein uL16 family. Part of the 50S ribosomal subunit.

Binds 23S rRNA and is also seen to make contacts with the A and possibly P site tRNAs. This is Large ribosomal subunit protein uL16 from Francisella philomiragia subsp. philomiragia (strain ATCC 25017 / CCUG 19701 / FSC 153 / O#319-036).